Consider the following 1368-residue polypeptide: DNA-directed RNA polymerase subunit beta (1368 aa).

Belongs to the RNA polymerase beta chain family. As to quaternary structure, the RNAP catalytic core consists of 2 alpha, 1 beta, 1 beta' and 1 omega subunit. When a sigma factor is associated with the core the holoenzyme is formed, which can initiate transcription.

It carries out the reaction RNA(n) + a ribonucleoside 5'-triphosphate = RNA(n+1) + diphosphate. DNA-dependent RNA polymerase catalyzes the transcription of DNA into RNA using the four ribonucleoside triphosphates as substrates. This Desulfosudis oleivorans (strain DSM 6200 / JCM 39069 / Hxd3) (Desulfococcus oleovorans) protein is DNA-directed RNA polymerase subunit beta.